The primary structure comprises 357 residues: MACLKLQAVTKSYDGVTPVIKQIDLDVADGEFIVMVGPSGCGKSTLLRMVAGLERTTTGDIYIGDQRVTDLEPKDRGIAMVFQNYVLYPHMNVFDNMAYGLKIRGFGKEQIRQRVDEAARILELQPLLKRKPRELSGGQRQRVAMGRAIVREPAVFLFDEPLSNLDAKLRVQMRLELQQLHRRLKTTSLYVTHDQVEAMTLAQRVIVMNKGVAEQIGTPSEVYKRPASLFVASFIGSPAMNLLDGTVSPDGRTFILSDGLTLPLEIPQPQWGGRRLTLGIRPEHIQQTTSAQGVPMNLLTLELLGADNLAHGLWGGQSIIARLSHEEMPVAGSTLHLYLPPAALHFFDTDSGLRIEP.

In terms of domain architecture, ABC transporter spans 4–235; that stretch reads LKLQAVTKSY…PASLFVASFI (232 aa). 37-44 is a binding site for ATP; the sequence is GPSGCGKS.

The protein belongs to the ABC transporter superfamily. sn-glycerol-3-phosphate importer (TC 3.A.1.1.3) family. In terms of assembly, the complex is composed of two ATP-binding proteins (UgpC), two transmembrane proteins (UgpA and UgpE) and a solute-binding protein (UgpB).

Its subcellular location is the cell inner membrane. The enzyme catalyses sn-glycerol 3-phosphate(out) + ATP + H2O = sn-glycerol 3-phosphate(in) + ADP + phosphate + H(+). Its function is as follows. Part of the ABC transporter complex UgpBAEC involved in sn-glycerol-3-phosphate (G3P) import. Responsible for energy coupling to the transport system. The protein is sn-glycerol-3-phosphate import ATP-binding protein UgpC of Yersinia pestis bv. Antiqua (strain Antiqua).